A 60-amino-acid chain; its full sequence is Metallothionein (60 aa).

An N-acetylmethionine modification is found at Met-1. The segment at 1 to 28 (MDPCECSKTGTCNCGGSCTCKNCSCTTC) is beta. A divalent metal cation is bound by residues Cys-4, Cys-6, Cys-12, Cys-14, Cys-18, Cys-20, Cys-23, Cys-25, Cys-28, Cys-32, Cys-33, Cys-35, Cys-36, Cys-40, Cys-43, Cys-47, Cys-49, Cys-54, Cys-58, and Cys-59. An alpha region spans residues 29-60 (NKSCCPCCPSGCPKCASGCVCKGKTCDTSCCQ).

It belongs to the metallothionein superfamily. Type 1 family.

Functionally, metallothioneins have a high content of cysteine residues that bind various heavy metals. The protein is Metallothionein (mt) of Pleuronectes platessa (European plaice).